Reading from the N-terminus, the 419-residue chain is MNAEILAVGSELLLGQITNTNARFISNQLSELGINVFYHTVVGDNAKRLEQAIEVAESRADLIIFSGGLGPTKDDLTKETIARHLGVSLEFDEVALTYIEQFFAKRGRPMTENNRKQALILAGSEILANHHGMAPGMIFNNNNHTYILLPGPPKELEPMFQFEAKPKLAAMLNDGGIIASHVMRFYGIGEAELEVQVQDILDAQTNPTVAPLASDGEVTLRVTAKAETEQQAQQLIAAKVAEIQALVGDYQYGMDDDSLASKTVEMLLDNHLTISAAESLTAGLFQSELAEIPGVGDALIGGVVTYAAEAKVKHLGISQELIDTHGVVSGECAAAMASAVRKQFGTNIGIGLTGEAGPTAHDHQPVGTVWIGIAINDEEPLTYLLHLSGMRNTNRLRAVKFTCHYLMQLLEERGYTKRY.

It belongs to the CinA family.

This is Putative competence-damage inducible protein from Lysinibacillus sphaericus (strain C3-41).